The chain runs to 331 residues: Tyrosine--tRNA ligase (331 aa).

L-tyrosine contacts are provided by Tyr-31, Tyr-155, Gln-159, Asp-162, and Gln-177. The 'KMSKS' region motif lies at 218–222 (KMSKS). An ATP-binding site is contributed by Lys-221.

It belongs to the class-I aminoacyl-tRNA synthetase family. TyrS type 4 subfamily. As to quaternary structure, homodimer.

Its subcellular location is the cytoplasm. The enzyme catalyses tRNA(Tyr) + L-tyrosine + ATP = L-tyrosyl-tRNA(Tyr) + AMP + diphosphate + H(+). Its function is as follows. Catalyzes the attachment of tyrosine to tRNA(Tyr) in a two-step reaction: tyrosine is first activated by ATP to form Tyr-AMP and then transferred to the acceptor end of tRNA(Tyr). The polypeptide is Tyrosine--tRNA ligase (Thermoplasma volcanium (strain ATCC 51530 / DSM 4299 / JCM 9571 / NBRC 15438 / GSS1)).